The primary structure comprises 128 residues: MAWYQGNDLRKPTGGKKTRHRKKRKHELGRPPTMTRFSVKEAQKIIRVRGGNLKIRLKRAVYVNVAVPNEGKVTKTRILEVVETPSNPQYARGNYITKGTIVRTELGLVKITSRPGQDGVLNGILLEK.

The interval 1–31 is disordered; it reads MAWYQGNDLRKPTGGKKTRHRKKRKHELGRP. Residues 13 to 27 show a composition bias toward basic residues; that stretch reads TGGKKTRHRKKRKHE.

Belongs to the eukaryotic ribosomal protein eS8 family. Part of the 30S ribosomal subunit.

This is Small ribosomal subunit protein eS8 from Staphylothermus marinus (strain ATCC 43588 / DSM 3639 / JCM 9404 / F1).